The following is a 465-amino-acid chain: Glutathione reductase (465 aa).

FAD-binding residues include serine 16 and glycine 17. Serine 16 contributes to the glutathione binding site. A glutathione-binding site is contributed by arginine 23. FAD-binding residues include glutamate 42, threonine 49, cysteine 50, and lysine 58. A disulfide bond links cysteine 50 and cysteine 55. Tyrosine 108 lines the glutathione pocket. Glycine 124 contributes to the FAD binding site. Residues alanine 187, isoleucine 190, glutamate 193, arginine 210, arginine 216, and glycine 276 each coordinate NADP(+). Aspartate 318 contributes to the FAD binding site. An NADP(+)-binding site is contributed by leucine 324. Threonine 326 provides a ligand contact to FAD. Arginine 334 contacts glutathione. NADP(+) is bound at residue valine 357. FAD is bound at residue histidine 454. Histidine 454 serves as the catalytic Proton acceptor.

The protein belongs to the class-I pyridine nucleotide-disulfide oxidoreductase family. The cofactor is FAD.

It is found in the cytoplasm. The enzyme catalyses 2 glutathione + NADP(+) = glutathione disulfide + NADPH + H(+). Its function is as follows. Catalyzes the reduction of glutathione disulfide (GSSG) to reduced glutathione (GSH). Constitutes the major mechanism to maintain a high GSH:GSSG ratio in the cytosol. The amount of GSH may affect the determination of cell fate. The sequence is that of Glutathione reductase (gsr) from Dictyostelium discoideum (Social amoeba).